The primary structure comprises 285 residues: MAVPKIVLFYVFTPLADPEAIRLWQYTLAEAHDLTGRILVSEHGINATVGGDIRDVKRYVKGTRSYAPFKDADIKWSDGLGNDFPRLSVKVRPEIVTFGAPGELKVDADGVVGGGTHLAPEEVHRLVEGRGDDVVFFDGRNGFEAEIGRFRDAVVPDVSTTRDFVHELDSGKYDHLKDKAVVTYCTGGVRCEVLSSLMRSRGFGEVYQLDGGIVRYGEAFGDTGLWEGSLYVFDKRMTIEFSDQAKTLGRCTRCGGPTSRYENLPDDRGRELVLVCAGCTENRAG.

The Rhodanese domain maps to 130–225 (RGDDVVFFDG…YGEAFGDTGL (96 aa)). The active-site Cysteine persulfide intermediate is the Cys185.

Belongs to the TrhO family.

It catalyses the reaction uridine(34) in tRNA + AH2 + O2 = 5-hydroxyuridine(34) in tRNA + A + H2O. In terms of biological role, catalyzes oxygen-dependent 5-hydroxyuridine (ho5U) modification at position 34 in tRNAs. The polypeptide is tRNA uridine(34) hydroxylase (Rhodococcus opacus (strain B4)).